A 233-amino-acid chain; its full sequence is UPF0758 protein RoseRS_0767 (233 aa).

The 123-residue stretch at 107–229 folds into the MPN domain; the sequence is LIRSPTDAAQ…FVSMRERGLG (123 aa). H178, H180, and D191 together coordinate Zn(2+). The short motif at 178-191 is the JAMM motif element; that stretch reads HNHPSGDPTPSPED.

The protein belongs to the UPF0758 family.

In Roseiflexus sp. (strain RS-1), this protein is UPF0758 protein RoseRS_0767.